A 457-amino-acid polypeptide reads, in one-letter code: Argininosuccinate lyase (457 aa).

Belongs to the lyase 1 family. Argininosuccinate lyase subfamily.

It localises to the cytoplasm. It catalyses the reaction 2-(N(omega)-L-arginino)succinate = fumarate + L-arginine. Its pathway is amino-acid biosynthesis; L-arginine biosynthesis; L-arginine from L-ornithine and carbamoyl phosphate: step 3/3. This chain is Argininosuccinate lyase, found in Sodalis glossinidius (strain morsitans).